The chain runs to 207 residues: Dephospho-CoA kinase (207 aa).

The 198-residue stretch at I10–P207 folds into the DPCK domain. Position 18–23 (G18–A23) interacts with ATP.

The protein belongs to the CoaE family.

It is found in the cytoplasm. It carries out the reaction 3'-dephospho-CoA + ATP = ADP + CoA + H(+). It participates in cofactor biosynthesis; coenzyme A biosynthesis; CoA from (R)-pantothenate: step 5/5. In terms of biological role, catalyzes the phosphorylation of the 3'-hydroxyl group of dephosphocoenzyme A to form coenzyme A. The chain is Dephospho-CoA kinase from Pseudomonas putida (strain ATCC 47054 / DSM 6125 / CFBP 8728 / NCIMB 11950 / KT2440).